A 339-amino-acid chain; its full sequence is MNDAAPDRQASVDFHLQALHPWLSRQDIAEICVNRPGQLWYEDRNGWNRQESGALTLDHLHALATATARFCDRDICPERPLLAASLPGGERVQIVVPPACEPGTLSLTIRKPARRIWPLSELLRDTLDLPGVPGASQARPDPLLDPWRRGAWDDFLRLAVQAGKAILVAGQTGSGKTTLMNALSGEIPPRERIVTIEDVRELRLDPATNHVHLLYGTPTEGRTAAVSATELLRAALRMAPTRILLAELRGGEAFDFLQACASGHSGGISTCHAASADMALQRLTLMCMQHPNCQMLPYSTLRALVESVIDIVVVVERRAGQGARRRVVDIWYRDGLPAP.

The protein belongs to the GSP E family.

This Bordetella parapertussis (strain 12822 / ATCC BAA-587 / NCTC 13253) protein is Type IV secretion system protein PtlH homolog (ptlH).